The following is a 535-amino-acid chain: Glutamate--cysteine ligase (535 aa).

The protein belongs to the glutamate--cysteine ligase type 1 family. Type 1 subfamily.

The catalysed reaction is L-cysteine + L-glutamate + ATP = gamma-L-glutamyl-L-cysteine + ADP + phosphate + H(+). It participates in sulfur metabolism; glutathione biosynthesis; glutathione from L-cysteine and L-glutamate: step 1/2. This Pseudomonas syringae pv. syringae (strain B728a) protein is Glutamate--cysteine ligase.